Consider the following 1392-residue polypeptide: DNA-directed RNA polymerase subunit beta (1392 aa).

Belongs to the RNA polymerase beta chain family. As to quaternary structure, the RNAP catalytic core consists of 2 alpha, 1 beta, 1 beta' and 1 omega subunit. When a sigma factor is associated with the core the holoenzyme is formed, which can initiate transcription.

The enzyme catalyses RNA(n) + a ribonucleoside 5'-triphosphate = RNA(n+1) + diphosphate. Functionally, DNA-dependent RNA polymerase catalyzes the transcription of DNA into RNA using the four ribonucleoside triphosphates as substrates. In Neisseria gonorrhoeae (strain NCCP11945), this protein is DNA-directed RNA polymerase subunit beta.